Reading from the N-terminus, the 512-residue chain is Sodium-dependent phosphate transport protein 1, chloroplastic (512 aa).

A chloroplast-targeting transit peptide spans 1–59 (MNARALLCSSNIHSLYTSNRPPEKTSSSRSLRNLKPSPKSLRVWIYPRNRSSVFRVLVR). A run of 11 helical transmembrane segments spans residues 103-123 (WVIV…RVNM), 141-161 (VGLI…AGGI), 171-191 (VLGF…VAAK), 192-212 (LGLP…GVAM), 234-254 (LVYS…PFLI), 257-277 (FGWP…LTLW), 323-343 (VWAL…LLTW), 361-381 (LLSV…GWIA), 401-421 (IGFL…SPTM), 453-473 (GVLL…GTAA), and 486-506 (VFTI…LFST).

It belongs to the major facilitator superfamily. Sodium/anion cotransporter (TC 2.A.1.14) family. In terms of tissue distribution, expressed in flower buds, sepals of mature flowers and mature leaves, less in senescent leaves and at low levels in roots.

It localises to the plastid. The protein localises to the chloroplast thylakoid membrane. Functionally, specific for inorganic phosphate transport across the thylakoid membrane in a sodium dependent manner. Binds glutamate but cannot transport it. May act as an ascorbate transporter at the thylakoid membrane. This chain is Sodium-dependent phosphate transport protein 1, chloroplastic (ANTR1), found in Arabidopsis thaliana (Mouse-ear cress).